Reading from the N-terminus, the 429-residue chain is Phosphoribosylamine--glycine ligase (429 aa).

Residues 109 to 316 form the ATP-grasp domain; the sequence is KDFLARHHIP…LVELCLAACD (208 aa). Residue 135 to 196 participates in ATP binding; sequence LREKGAPIVV…EEFLDGEEAS (62 aa). A disordered region spans residues 209-231; it reads MATSQDHKRVGENDTGLNTGGMG. Residues Glu286 and Asn288 each contribute to the Mg(2+) site.

The protein belongs to the GARS family. Mg(2+) is required as a cofactor. It depends on Mn(2+) as a cofactor.

It carries out the reaction 5-phospho-beta-D-ribosylamine + glycine + ATP = N(1)-(5-phospho-beta-D-ribosyl)glycinamide + ADP + phosphate + H(+). It functions in the pathway purine metabolism; IMP biosynthesis via de novo pathway; N(1)-(5-phospho-D-ribosyl)glycinamide from 5-phospho-alpha-D-ribose 1-diphosphate: step 2/2. This chain is Phosphoribosylamine--glycine ligase, found in Pasteurella multocida (strain Pm70).